The primary structure comprises 172 residues: Ubiquitin-conjugating enzyme E2 PEX4 (172 aa).

Residues 14-167 (SASKRLIKEL…VELWCQDSDS (154 aa)) form the UBC core domain. Cys104 functions as the Glycyl thioester intermediate in the catalytic mechanism.

This sequence belongs to the ubiquitin-conjugating enzyme family.

It carries out the reaction S-ubiquitinyl-[E1 ubiquitin-activating enzyme]-L-cysteine + [E2 ubiquitin-conjugating enzyme]-L-cysteine = [E1 ubiquitin-activating enzyme]-L-cysteine + S-ubiquitinyl-[E2 ubiquitin-conjugating enzyme]-L-cysteine.. It participates in protein modification; protein ubiquitination. Ubiquitin-conjugating enzyme E2 that is essential for peroxisome biogenesis and plays a key role in development, pathogenicity, and cell wall integrity. Required for long and very long-chain fatty acid utilization and is involved in lipid droplet accumulation and the elimination of reactive oxygen species. Controls the expression of proteins involved in protein biosynthesis, fatty acid metabolism, cell wall synthesis, oxidation-reduction reactions, as well as of the enzymes involved in the biosynthesis of the mycotoxin deoxynivalenol (DON), including TRI5, TRI6, and TRI10. The sequence is that of Ubiquitin-conjugating enzyme E2 PEX4 from Gibberella zeae (strain ATCC MYA-4620 / CBS 123657 / FGSC 9075 / NRRL 31084 / PH-1) (Wheat head blight fungus).